The chain runs to 332 residues: Holliday junction branch migration complex subunit RuvB (332 aa).

Positions 1 to 181 (MSRILDNEMM…FGITGHMEYY (181 aa)) are large ATPase domain (RuvB-L). ATP is bound by residues Leu20, Arg21, Gly62, Lys65, Thr66, Thr67, 128 to 130 (EDF), Arg171, Tyr181, and Arg218. A Mg(2+)-binding site is contributed by Thr66. The segment at 182-252 (AHADLTEIVE…ITDKALTMLD (71 aa)) is small ATPAse domain (RuvB-S). A head domain (RuvB-H) region spans residues 255–332 (HEGLDYVDQK…EHLGYEYSEK (78 aa)). 4 residues coordinate DNA: Arg291, Arg310, Arg312, and Arg315.

The protein belongs to the RuvB family. Homohexamer. Forms an RuvA(8)-RuvB(12)-Holliday junction (HJ) complex. HJ DNA is sandwiched between 2 RuvA tetramers; dsDNA enters through RuvA and exits via RuvB. An RuvB hexamer assembles on each DNA strand where it exits the tetramer. Each RuvB hexamer is contacted by two RuvA subunits (via domain III) on 2 adjacent RuvB subunits; this complex drives branch migration. In the full resolvosome a probable DNA-RuvA(4)-RuvB(12)-RuvC(2) complex forms which resolves the HJ.

It localises to the cytoplasm. It carries out the reaction ATP + H2O = ADP + phosphate + H(+). Functionally, the RuvA-RuvB-RuvC complex processes Holliday junction (HJ) DNA during genetic recombination and DNA repair, while the RuvA-RuvB complex plays an important role in the rescue of blocked DNA replication forks via replication fork reversal (RFR). RuvA specifically binds to HJ cruciform DNA, conferring on it an open structure. The RuvB hexamer acts as an ATP-dependent pump, pulling dsDNA into and through the RuvAB complex. RuvB forms 2 homohexamers on either side of HJ DNA bound by 1 or 2 RuvA tetramers; 4 subunits per hexamer contact DNA at a time. Coordinated motions by a converter formed by DNA-disengaged RuvB subunits stimulates ATP hydrolysis and nucleotide exchange. Immobilization of the converter enables RuvB to convert the ATP-contained energy into a lever motion, pulling 2 nucleotides of DNA out of the RuvA tetramer per ATP hydrolyzed, thus driving DNA branch migration. The RuvB motors rotate together with the DNA substrate, which together with the progressing nucleotide cycle form the mechanistic basis for DNA recombination by continuous HJ branch migration. Branch migration allows RuvC to scan DNA until it finds its consensus sequence, where it cleaves and resolves cruciform DNA. The polypeptide is Holliday junction branch migration complex subunit RuvB (Streptococcus pneumoniae serotype 4 (strain ATCC BAA-334 / TIGR4)).